The chain runs to 152 residues: MIDREQIVRIVSDYLSTGETFLVEVAIHPGNRILVELDSAQGVCIDECVALSRHIESQVDRDIEDYELEVGSTGLTSPLKVMRQWENCIDSELSVLLTNGMKETGRLITVAPEAIKLEVVRMVKPEGAKRKKPETQELTIVMADIKQAVRII.

It belongs to the RimP family.

It localises to the cytoplasm. Its function is as follows. Required for maturation of 30S ribosomal subunits. The polypeptide is Ribosome maturation factor RimP (Porphyromonas gingivalis (strain ATCC BAA-308 / W83)).